Consider the following 190-residue polypeptide: uncharacterized protein (190 aa).

This is an uncharacterized protein from Borreliella burgdorferi (strain ATCC 35210 / DSM 4680 / CIP 102532 / B31) (Borrelia burgdorferi).